The following is a 182-amino-acid chain: Histone deacetylase complex subunit SAP30L (182 aa).

The residue at position 1 (Met1) is an N-acetylmethionine. A compositionally biased stretch (acidic residues) spans 1–10; it reads MNGFSTEEDS. The segment at 1–22 is disordered; that stretch reads MNGFSTEEDSREGPPAAPAAAP. Cystine bridges form between Cys28–Cys29 and Cys37–Cys73. The segment at 28 to 76 adopts an Atypical zinc-finger fold; the sequence is CCLIADGERCVRPAGNASFSKRVQKSISQKKLKLDIDKSVRHLYICDFH. Lys48 participates in a covalent cross-link: Glycyl lysine isopeptide (Lys-Gly) (interchain with G-Cter in SUMO2). The disordered stretch occupies residues 84 to 103; the sequence is RNKRKRKASDDGGDSPEHDA. Residues 85-90 carry the Nuclear localization signal (NLS) motif; the sequence is NKRKRK. Residues 87–89 are important for DNA and phosphoinositide binding; that stretch reads RKR. Phosphoserine occurs at positions 92 and 98. Residues Lys154, Lys165, and Lys174 each participate in a glycyl lysine isopeptide (Lys-Gly) (interchain with G-Cter in SUMO2) cross-link.

This sequence belongs to the SAP30 family. In terms of assembly, interacts with components of the histone deacetylase complex SIN3A, HDAC1 and HDAC2. Binds histones and nucleosomes. Interacts with FEZ1.

It is found in the nucleus. It localises to the nucleolus. Functions as a transcription repressor, probably via its interaction with histone deacetylase complexes. Involved in the functional recruitment of the class 1 Sin3-histone deacetylase complex (HDAC) to the nucleolus. Binds DNA, apparently without sequence-specificity, and bends bound double-stranded DNA. Binds phosphoinositol phosphates (phosphoinositol 3-phosphate, phosphoinositol 4-phosphate and phosphoinositol 5-phosphate) via the same basic sequence motif that mediates DNA binding and nuclear import. In Mus musculus (Mouse), this protein is Histone deacetylase complex subunit SAP30L (Sap30l).